We begin with the raw amino-acid sequence, 119 residues long: Large ribosomal subunit protein bL20c (119 aa).

Belongs to the bacterial ribosomal protein bL20 family.

It is found in the plastid. Its subcellular location is the chloroplast. Its function is as follows. Binds directly to 23S ribosomal RNA and is necessary for the in vitro assembly process of the 50S ribosomal subunit. It is not involved in the protein synthesizing functions of that subunit. The sequence is that of Large ribosomal subunit protein bL20c from Amborella trichopoda.